The chain runs to 610 residues: Manganese lipoxygenase (610 aa).

The first 16 residues, methionine 1 to threonine 16, serve as a signal peptide directing secretion. In terms of domain architecture, Lipoxygenase spans phenylalanine 47 to valine 610. Residues asparagine 157 and asparagine 259 are each glycosylated (N-linked (GlcNAc...) asparagine). Histidine 290 and histidine 295 together coordinate Mn(2+). N-linked (GlcNAc...) asparagine glycosylation is present at asparagine 386. Residues histidine 475 and asparagine 479 each contribute to the Mn(2+) site. An N-linked (GlcNAc...) asparagine glycan is attached at asparagine 540. Residue valine 610 participates in Mn(2+) binding.

It belongs to the lipoxygenase family. Manganese lipoxygenase subfamily. Requires Mn(2+) as cofactor. Post-translationally, N- and O-glycosylated.

It is found in the secreted. The catalysed reaction is (9Z,12Z)-octadecadienoate + O2 = (11S)-hydroperoxy-(9Z,12Z)-octadecadienoate. It catalyses the reaction (9Z,12Z)-octadecadienoate + O2 = (11R)-hydroperoxy-(9Z,12Z)-octadecadienoate. The enzyme catalyses (9Z,12Z)-octadecadienoate + O2 = (13S)-hydroperoxy-(9Z,11E)-octadecadienoate. It carries out the reaction (9Z,12Z,15Z)-octadecatrienoate + O2 = (11S)-hydroperoxy-(9Z,12Z,15Z)-octadecatrienoate. Its function is as follows. Lipoxygenase that metabolizes linoleic and alpha-linolenic acids to 9-, 11- and 13-hydroperoxy fatty acids. Oxidizes linoleic acid to mainly 11R-, 13S- and racemic 9-HPODE, and alpha-linolenic acid to 11-HPOTrE. The polypeptide is Manganese lipoxygenase (Fusarium oxysporum (strain Fo5176) (Fusarium vascular wilt)).